The primary structure comprises 358 residues: Alpha-2-HS-glycoprotein (358 aa).

The N-terminal stretch at 1–18 is a signal peptide; it reads MKFFVLFLCLVQLWGCHS. The 107-residue stretch at 27 to 133 folds into the Cystatin fetuin-A-type 1 domain; that stretch reads ERNPACDDPE…QFSVVFAKCE (107 aa). 6 disulfide bridges follow: Cys32–Cys349, Cys89–Cys100, Cys114–Cys132, Cys146–Cys149, Cys208–Cys218, and Cys229–Cys246. Asn99 carries N-linked (GlcNAc...) asparagine glycosylation. At Ser134 the chain carries Phosphoserine. The residue at position 135 (Thr135) is a Phosphothreonine. Position 138 is a phosphoserine (Ser138). Positions 144–254 constitute a Cystatin fetuin-A-type 2 domain; that stretch reads KVCPQCPLLT…TCTVFPTQPV (111 aa). N-linked (GlcNAc...) asparagine glycans are attached at residues Asn156 and Asn176. Positions 257–288 are disordered; it reads LPQPDAASSANPPPAADPAVSPPSSPSVPVDS. The segment covering 267–282 has biased composition (pro residues); it reads NPPPAADPAVSPPSSP. Ser318 and Ser320 each carry phosphoserine. The segment at 320–350 is disordered; sequence SGEAFGPRQKPKVTHPGVASGVGPVPPPPCP.

Belongs to the fetuin family. Phosphorylated by FAM20C in the extracellular medium. In terms of tissue distribution, bone marrow.

The protein resides in the secreted. The chain is Alpha-2-HS-glycoprotein (AHSG) from Cavia porcellus (Guinea pig).